Here is a 406-residue protein sequence, read N- to C-terminus: Tryptophan 2,3-dioxygenase A (406 aa).

Substrate-binding positions include 71-75 (FIVTH) and Arg-143. His-327 is a binding site for heme. A substrate-binding site is contributed by Thr-341.

Belongs to the tryptophan 2,3-dioxygenase family. In terms of assembly, homotetramer. Dimer of dimers. It depends on heme as a cofactor.

It carries out the reaction L-tryptophan + O2 = N-formyl-L-kynurenine. Its pathway is amino-acid degradation; L-tryptophan degradation via kynurenine pathway; L-kynurenine from L-tryptophan: step 1/2. Functionally, heme-dependent dioxygenase that catalyzes the oxidative cleavage of the L-tryptophan (L-Trp) pyrrole ring and converts L-tryptophan to N-formyl-L-kynurenine. Catalyzes the oxidative cleavage of the indole moiety. This is Tryptophan 2,3-dioxygenase A from Danio rerio (Zebrafish).